The primary structure comprises 304 residues: Ribonuclease HII (304 aa).

The interval 1–53 is disordered; that stretch reads MIRDTKQPIKVPAKPASRSGGKAKTVKPKTVKPKAVKAADGKAASAKASTSKA. Residues 24-35 are compositionally biased toward basic residues; the sequence is KTVKPKTVKPKA. Positions 36–53 are enriched in low complexity; that stretch reads VKAADGKAASAKASTSKA. Residues 96–284 form the RNase H type-2 domain; the sequence is WPIAGCDEAG…VAAAWQKIEG (189 aa). A divalent metal cation contacts are provided by D102, E103, and D193.

Belongs to the RNase HII family. Requires Mn(2+) as cofactor. The cofactor is Mg(2+).

The protein resides in the cytoplasm. The catalysed reaction is Endonucleolytic cleavage to 5'-phosphomonoester.. Endonuclease that specifically degrades the RNA of RNA-DNA hybrids. The chain is Ribonuclease HII from Rhodopseudomonas palustris (strain ATCC BAA-98 / CGA009).